We begin with the raw amino-acid sequence, 83 residues long: Small ribosomal subunit protein bS18 (83 aa).

It belongs to the bacterial ribosomal protein bS18 family. As to quaternary structure, part of the 30S ribosomal subunit. Forms a tight heterodimer with protein bS6.

Its function is as follows. Binds as a heterodimer with protein bS6 to the central domain of the 16S rRNA, where it helps stabilize the platform of the 30S subunit. The chain is Small ribosomal subunit protein bS18 from Tropheryma whipplei (strain TW08/27) (Whipple's bacillus).